We begin with the raw amino-acid sequence, 114 residues long: Large ribosomal subunit protein uL22 (114 aa).

This sequence belongs to the universal ribosomal protein uL22 family. Part of the 50S ribosomal subunit.

Functionally, this protein binds specifically to 23S rRNA; its binding is stimulated by other ribosomal proteins, e.g. L4, L17, and L20. It is important during the early stages of 50S assembly. It makes multiple contacts with different domains of the 23S rRNA in the assembled 50S subunit and ribosome. In terms of biological role, the globular domain of the protein is located near the polypeptide exit tunnel on the outside of the subunit, while an extended beta-hairpin is found that lines the wall of the exit tunnel in the center of the 70S ribosome. This chain is Large ribosomal subunit protein uL22, found in Bacillus licheniformis (strain ATCC 14580 / DSM 13 / JCM 2505 / CCUG 7422 / NBRC 12200 / NCIMB 9375 / NCTC 10341 / NRRL NRS-1264 / Gibson 46).